Here is a 202-residue protein sequence, read N- to C-terminus: Na(+)-translocating NADH-quinone reductase subunit E (202 aa).

6 helical membrane passes run 11–31 (SVFI…FLAM), 35–55 (INAA…TVPA), 81–101 (FLSF…MEMV), 114–134 (GVFL…LFMV), 144–164 (VVYG…LAGI), and 180–200 (LGIT…FGGI).

The protein belongs to the NqrDE/RnfAE family. Composed of six subunits; NqrA, NqrB, NqrC, NqrD, NqrE and NqrF.

It is found in the cell inner membrane. It catalyses the reaction a ubiquinone + n Na(+)(in) + NADH + H(+) = a ubiquinol + n Na(+)(out) + NAD(+). In terms of biological role, NQR complex catalyzes the reduction of ubiquinone-1 to ubiquinol by two successive reactions, coupled with the transport of Na(+) ions from the cytoplasm to the periplasm. NqrA to NqrE are probably involved in the second step, the conversion of ubisemiquinone to ubiquinol. This Cellvibrio japonicus (strain Ueda107) (Pseudomonas fluorescens subsp. cellulosa) protein is Na(+)-translocating NADH-quinone reductase subunit E.